Here is a 493-residue protein sequence, read N- to C-terminus: Acetylcholine receptor subunit epsilon (493 aa).

The first 20 residues, 1-20, serve as a signal peptide directing secretion; sequence MARAPLGVLLLLGLLGRGVG. At 21–239 the chain is on the extracellular side; that stretch reads KNEELRLYHH…VIYSLIIRRK (219 aa). Residues Asn-86 and Asn-161 are each glycosylated (N-linked (GlcNAc...) asparagine). Residues Cys-148 and Cys-162 are joined by a disulfide bond. Residues 240 to 264 traverse the membrane as a helical segment; that stretch reads PLFYVINIIVPCVLISGLVLLAYFL. Residues 265-272 lie on the Cytoplasmic side of the membrane; that stretch reads PAQAGGQK. Residues 273–291 traverse the membrane as a helical segment; that stretch reads CTVSINVLLAQTVFLFLIA. Topologically, residues 292-306 are extracellular; it reads QKIPETSLSVPLLGR. A helical transmembrane segment spans residues 307–328; that stretch reads FLIFVMVVATLIVMNCVIVLNV. Residues 329-456 are Cytoplasmic-facing; it reads SQRTPTTHAM…WVRMGNALDN (128 aa). Residues 457–480 traverse the membrane as a helical segment; sequence ICFWAALVLFSVGSSLIFLGAYFN. The Extracellular segment spans residues 481 to 493; sequence RVPDLPYAPCIQP.

The protein belongs to the ligand-gated ion channel (TC 1.A.9) family. Acetylcholine receptor (TC 1.A.9.1) subfamily. Epsilon/CHRNE sub-subfamily. As to quaternary structure, pentamer of two alpha chains, and one each of the beta, delta, and gamma (in immature muscle) or epsilon (in mature muscle) chains. The muscle heteropentamer composed of alpha-1, beta-1, delta, epsilon subunits interacts with the alpha-conotoxin ImII.

It is found in the postsynaptic cell membrane. The protein localises to the cell membrane. The catalysed reaction is K(+)(in) = K(+)(out). It carries out the reaction Na(+)(in) = Na(+)(out). Its function is as follows. After binding acetylcholine, the AChR responds by an extensive change in conformation that affects all subunits and leads to opening of an ion-conducting channel across the plasma membrane. The chain is Acetylcholine receptor subunit epsilon from Homo sapiens (Human).